A 343-amino-acid polypeptide reads, in one-letter code: uncharacterized protein (343 aa).

This is an uncharacterized protein from Acanthamoeba polyphaga mimivirus (APMV).